A 226-amino-acid chain; its full sequence is Chalcone--flavanone isomerase 1 (226 aa).

Substrate contacts are provided by Thr-52, Asn-117, and Thr-194.

This sequence belongs to the chalcone isomerase family.

It catalyses the reaction a chalcone = a flavanone.. The protein operates within secondary metabolite biosynthesis; flavonoid biosynthesis. Its function is as follows. Catalyzes the intramolecular cyclization of bicyclic chalcones into tricyclic (S)-flavanones. Responsible for the isomerization of 4,2',4',6'-tetrahydroxychalcone (also termed chalcone) into naringenin. In Lotus japonicus (Lotus corniculatus var. japonicus), this protein is Chalcone--flavanone isomerase 1 (CHI1).